Reading from the N-terminus, the 215-residue chain is MKYELTATEARVIGCLLEKQVTTPEQYPLSVNGVVTACNQKTNREPVMNLTEQEVQEQLDNLVKRHFLRTVSGFGNRVTKYEQRFCNSEFGDLKLSAAEVALVTTLLLRGAQTPGELRSRASRMHEFSDMAEVESTLERLASREDGPYVVRLAREPGKRESRYMHLFCGDVDELSLQTSAPESASGDLQSRVEALESEVAELKQRLDSLLAHLGE.

This sequence belongs to the UPF0502 family.

The chain is UPF0502 protein YceH from Salmonella paratyphi B (strain ATCC BAA-1250 / SPB7).